Consider the following 100-residue polypeptide: Large ribosomal subunit protein uL23 (100 aa).

It belongs to the universal ribosomal protein uL23 family. Part of the 50S ribosomal subunit. Contacts protein L29, and trigger factor when it is bound to the ribosome.

One of the early assembly proteins it binds 23S rRNA. One of the proteins that surrounds the polypeptide exit tunnel on the outside of the ribosome. Forms the main docking site for trigger factor binding to the ribosome. This is Large ribosomal subunit protein uL23 from Prochlorococcus marinus (strain MIT 9215).